A 512-amino-acid polypeptide reads, in one-letter code: Ribose import ATP-binding protein RbsA 2 (512 aa).

2 ABC transporter domains span residues 22–258 (LEMR…VGRD) and 263–512 (FPKV…TGNA). 54-61 (GENGAGKS) provides a ligand contact to ATP.

This sequence belongs to the ABC transporter superfamily. Ribose importer (TC 3.A.1.2.1) family. The complex is composed of an ATP-binding protein (RbsA), two transmembrane proteins (RbsC) and a solute-binding protein (RbsB).

It is found in the cell inner membrane. It catalyses the reaction D-ribose(out) + ATP + H2O = D-ribose(in) + ADP + phosphate + H(+). Functionally, part of the ABC transporter complex RbsABC involved in ribose import. Responsible for energy coupling to the transport system. The chain is Ribose import ATP-binding protein RbsA 2 from Rhizobium johnstonii (strain DSM 114642 / LMG 32736 / 3841) (Rhizobium leguminosarum bv. viciae).